The primary structure comprises 181 residues: Peptidyl-tRNA hydrolase (181 aa).

Tyr-14 serves as a coordination point for tRNA. His-19 (proton acceptor) is an active-site residue. Positions 60, 62, and 106 each coordinate tRNA.

The protein belongs to the PTH family. Monomer.

The protein resides in the cytoplasm. It carries out the reaction an N-acyl-L-alpha-aminoacyl-tRNA + H2O = an N-acyl-L-amino acid + a tRNA + H(+). Its function is as follows. Hydrolyzes ribosome-free peptidyl-tRNAs (with 1 or more amino acids incorporated), which drop off the ribosome during protein synthesis, or as a result of ribosome stalling. In terms of biological role, catalyzes the release of premature peptidyl moieties from peptidyl-tRNA molecules trapped in stalled 50S ribosomal subunits, and thus maintains levels of free tRNAs and 50S ribosomes. This is Peptidyl-tRNA hydrolase from Campylobacter curvus (strain 525.92).